The sequence spans 120 residues: Large ribosomal subunit protein uL18 (120 aa).

It belongs to the universal ribosomal protein uL18 family. Part of the 50S ribosomal subunit; part of the 5S rRNA/L5/L18/L25 subcomplex. Contacts the 5S and 23S rRNAs.

Functionally, this is one of the proteins that bind and probably mediate the attachment of the 5S RNA into the large ribosomal subunit, where it forms part of the central protuberance. The protein is Large ribosomal subunit protein uL18 of Ehrlichia ruminantium (strain Gardel).